The following is a 337-amino-acid chain: Ketol-acid reductoisomerase (NADP(+)) (337 aa).

In terms of domain architecture, KARI N-terminal Rossmann spans 1-180 (MKIYYDTDVN…GGGRAGIIET (180 aa)). NADP(+) is bound by residues 24–27 (YGSQ), Arg-47, Ser-51, and 81–84 (DELQ). The active site involves His-106. NADP(+) is bound at residue Gly-132. The KARI C-terminal knotted domain occupies 181–326 (TFKDETETDL…EKLRAMMPWL (146 aa)). Residues Asp-189, Glu-193, Glu-225, and Glu-229 each coordinate Mg(2+). Ser-250 contributes to the substrate binding site.

It belongs to the ketol-acid reductoisomerase family. Requires Mg(2+) as cofactor.

It catalyses the reaction (2R)-2,3-dihydroxy-3-methylbutanoate + NADP(+) = (2S)-2-acetolactate + NADPH + H(+). The catalysed reaction is (2R,3R)-2,3-dihydroxy-3-methylpentanoate + NADP(+) = (S)-2-ethyl-2-hydroxy-3-oxobutanoate + NADPH + H(+). The protein operates within amino-acid biosynthesis; L-isoleucine biosynthesis; L-isoleucine from 2-oxobutanoate: step 2/4. It participates in amino-acid biosynthesis; L-valine biosynthesis; L-valine from pyruvate: step 2/4. Functionally, involved in the biosynthesis of branched-chain amino acids (BCAA). Catalyzes an alkyl-migration followed by a ketol-acid reduction of (S)-2-acetolactate (S2AL) to yield (R)-2,3-dihydroxy-isovalerate. In the isomerase reaction, S2AL is rearranged via a Mg-dependent methyl migration to produce 3-hydroxy-3-methyl-2-ketobutyrate (HMKB). In the reductase reaction, this 2-ketoacid undergoes a metal-dependent reduction by NADPH to yield (R)-2,3-dihydroxy-isovalerate. The chain is Ketol-acid reductoisomerase (NADP(+)) from Thermodesulfovibrio yellowstonii (strain ATCC 51303 / DSM 11347 / YP87).